A 173-amino-acid polypeptide reads, in one-letter code: Archaemetzincin (173 aa).

Residue H130 participates in Zn(2+) binding. The Proton acceptor role is filled by E131. 6 residues coordinate Zn(2+): H134, H140, C141, C146, C165, and C168.

Belongs to the peptidase M54 family. As to quaternary structure, monomer. Zn(2+) serves as cofactor.

In terms of biological role, probable zinc metalloprotease whose natural substrate is unknown. This is Archaemetzincin from Haloquadratum walsbyi (strain DSM 16790 / HBSQ001).